A 269-amino-acid chain; its full sequence is 3-methyl-2-oxobutanoate hydroxymethyltransferase (269 aa).

2 residues coordinate Mg(2+): aspartate 50 and aspartate 89. 3-methyl-2-oxobutanoate-binding positions include 50 to 51 (DS), aspartate 89, and lysine 118. Glutamate 120 lines the Mg(2+) pocket. Glutamate 187 (proton acceptor) is an active-site residue.

This sequence belongs to the PanB family. Homodecamer; pentamer of dimers. Requires Mg(2+) as cofactor.

The protein localises to the cytoplasm. It catalyses the reaction 3-methyl-2-oxobutanoate + (6R)-5,10-methylene-5,6,7,8-tetrahydrofolate + H2O = 2-dehydropantoate + (6S)-5,6,7,8-tetrahydrofolate. The protein operates within cofactor biosynthesis; (R)-pantothenate biosynthesis; (R)-pantoate from 3-methyl-2-oxobutanoate: step 1/2. Its function is as follows. Catalyzes the reversible reaction in which hydroxymethyl group from 5,10-methylenetetrahydrofolate is transferred onto alpha-ketoisovalerate to form ketopantoate. The chain is 3-methyl-2-oxobutanoate hydroxymethyltransferase from Nitrosomonas europaea (strain ATCC 19718 / CIP 103999 / KCTC 2705 / NBRC 14298).